The sequence spans 123 residues: Small ribosomal subunit protein uS11 (123 aa).

Belongs to the universal ribosomal protein uS11 family. Part of the 30S ribosomal subunit. Interacts with proteins S7 and S18. Binds to IF-3.

Located on the platform of the 30S subunit, it bridges several disparate RNA helices of the 16S rRNA. Forms part of the Shine-Dalgarno cleft in the 70S ribosome. This chain is Small ribosomal subunit protein uS11, found in Coxiella burnetii (strain CbuG_Q212) (Coxiella burnetii (strain Q212)).